Consider the following 564-residue polypeptide: Bifunctional sesquiterpene synthase 1 (564 aa).

Residues aspartate 317, aspartate 321, aspartate 461, and glutamate 469 each contribute to the Mg(2+) site. Positions 317–321 (DDTFD) match the DDXXD motif motif.

Belongs to the terpene synthase family. Requires Mg(2+) as cofactor.

It carries out the reaction (2E,6E)-farnesyl diphosphate = alpha-copaene + diphosphate. It catalyses the reaction (2E,6E)-farnesyl diphosphate = delta-cadinene + diphosphate. It functions in the pathway secondary metabolite biosynthesis; terpenoid biosynthesis. In terms of biological role, sesquiterpene synthase converting farnesyl diphosphate to alpha copaene and delta-cadinene as the major products. The chain is Bifunctional sesquiterpene synthase 1 from Phyla dulcis (Aztec sweet herb).